Consider the following 330-residue polypeptide: Pantothenate kinase (330 aa).

108 to 115 (GSVAVGKS) contacts ATP.

It belongs to the prokaryotic pantothenate kinase family.

The protein resides in the cytoplasm. It carries out the reaction (R)-pantothenate + ATP = (R)-4'-phosphopantothenate + ADP + H(+). It functions in the pathway cofactor biosynthesis; coenzyme A biosynthesis; CoA from (R)-pantothenate: step 1/5. The protein is Pantothenate kinase of Allorhizobium ampelinum (strain ATCC BAA-846 / DSM 112012 / S4) (Agrobacterium vitis (strain S4)).